A 592-amino-acid chain; its full sequence is Arginine--tRNA ligase (592 aa).

Positions Val-112–His-122 match the 'HIGH' region motif.

It belongs to the class-I aminoacyl-tRNA synthetase family. In terms of assembly, monomer.

The protein localises to the cytoplasm. The catalysed reaction is tRNA(Arg) + L-arginine + ATP = L-arginyl-tRNA(Arg) + AMP + diphosphate. This Thermus thermophilus (strain ATCC 27634 / DSM 579 / HB8) protein is Arginine--tRNA ligase.